The primary structure comprises 366 residues: Methylthioribose-1-phosphate isomerase (366 aa).

Asp-260 functions as the Proton donor in the catalytic mechanism.

It belongs to the eIF-2B alpha/beta/delta subunits family. MtnA subfamily.

Its subcellular location is the cytoplasm. It is found in the nucleus. It catalyses the reaction 5-(methylsulfanyl)-alpha-D-ribose 1-phosphate = 5-(methylsulfanyl)-D-ribulose 1-phosphate. It functions in the pathway amino-acid biosynthesis; L-methionine biosynthesis via salvage pathway; L-methionine from S-methyl-5-thio-alpha-D-ribose 1-phosphate: step 1/6. Functionally, catalyzes the interconversion of methylthioribose-1-phosphate (MTR-1-P) into methylthioribulose-1-phosphate (MTRu-1-P). This chain is Methylthioribose-1-phosphate isomerase, found in Caenorhabditis briggsae.